A 165-amino-acid polypeptide reads, in one-letter code: MAATATSKITLTSSDGVEITIERQVAERSILIKNMLEDLGDSGEAIPIPNVNESVLKKVIEWCKHHKGDPPSTGDDDVDSRRKTTDIDEWDQKFMQVDQEMLFEIILAANYLDIKALLDVGCKTVANMIKGKSPEEIRKTFNIQNDFTPEEEDQIRRENEWAEDR.

Residues 106–165 are interaction with the F-box domain of F-box proteins; that stretch reads ILAANYLDIKALLDVGCKTVANMIKGKSPEEIRKTFNIQNDFTPEEEDQIRRENEWAEDR.

This sequence belongs to the SKP1 family. Component of the SCF (SKP1-CUL1-F-box protein) E3 ubiquitin ligase complexes.

The protein operates within protein modification; protein ubiquitination. Essential component of the SCF (SKP1-CUL1-F-box protein) E3 ubiquitin ligase complexes, which mediate the ubiquitination and subsequent proteasomal degradation of target proteins. Controls sulfur metabolite repression, probably by mediating the inactivation or degradation of the metR transcription factor. The sequence is that of E3 ubiquitin ligase complex SCF subunit sconC (sconC) from Arthroderma otae (strain ATCC MYA-4605 / CBS 113480) (Microsporum canis).